The following is a 361-amino-acid chain: Chorismate synthase (361 aa).

NADP(+)-binding residues include arginine 48 and arginine 54. Residues 125 to 127 (RSS), 238 to 239 (NA), glycine 278, 293 to 297 (KPTSS), and arginine 319 contribute to the FMN site.

It belongs to the chorismate synthase family. As to quaternary structure, homotetramer. Requires FMNH2 as cofactor.

It catalyses the reaction 5-O-(1-carboxyvinyl)-3-phosphoshikimate = chorismate + phosphate. It participates in metabolic intermediate biosynthesis; chorismate biosynthesis; chorismate from D-erythrose 4-phosphate and phosphoenolpyruvate: step 7/7. Functionally, catalyzes the anti-1,4-elimination of the C-3 phosphate and the C-6 proR hydrogen from 5-enolpyruvylshikimate-3-phosphate (EPSP) to yield chorismate, which is the branch point compound that serves as the starting substrate for the three terminal pathways of aromatic amino acid biosynthesis. This reaction introduces a second double bond into the aromatic ring system. This Cronobacter sakazakii (strain ATCC BAA-894) (Enterobacter sakazakii) protein is Chorismate synthase.